Here is a 201-residue protein sequence, read N- to C-terminus: Large ribosomal subunit protein uL4 (201 aa).

The segment at 45–72 (AQKTRAEVTGSGKKPWRQKGTGRARAGS) is disordered.

It belongs to the universal ribosomal protein uL4 family. In terms of assembly, part of the 50S ribosomal subunit.

Its function is as follows. One of the primary rRNA binding proteins, this protein initially binds near the 5'-end of the 23S rRNA. It is important during the early stages of 50S assembly. It makes multiple contacts with different domains of the 23S rRNA in the assembled 50S subunit and ribosome. Functionally, forms part of the polypeptide exit tunnel. This chain is Large ribosomal subunit protein uL4, found in Shewanella frigidimarina (strain NCIMB 400).